The chain runs to 701 residues: MARTTPISRYRNIGISAHIDAGKTTTSERILFYTGVSHKLGEVHDGAATMDWMEQEQERGITITSAATTAFWSGMSKQFEQHRINVIDTPGHVDFTIEVERSMRVLDGAVMVYCAVGGVQPQSETVWRQANKYQVPRIAFVNKMDRTGANFLRVVDQIKTRLGGNSVALQLPIGSEDNFKGVVDLIKMKAINWNEADQGMTFTYEDIPADMLEACEERRAMLVEAAAEASEELMEKFFSGEELTEEEIKTALRQRVLANEIIPVCCGSAFKNKGVQAMLDAVIEYLPAPTDIPAIKGINEDETEGERHASDDEPFAALAFKIATDPFVGNLTFFRVYSGVINSGDTVYNSVKQKRERFGRIVQMHANKREEIKEVRAGDIAAAIGLKDVGTGDTLCAQDAPIILERMEFPEPVISVAVEPKTKADQEKMGLALGRLAQEDPSFRVHTDEESGETIISGMGELHLDIIVDRMRREFKVEANIGKPQVSYRETIRTTVKDVEGKHAKQSGGRGQYGHVVIDLYPLEPEGPGYEFVNEIKGGVIPGEFIPAVDKGIQEQLKSGPLAGYPVVDVGVRLHFGSYHDVDSSELAFKLAASLAFKSAFGRANPVLLEPIMKVEVETPPDYVGDVIGDLSRRRAMVNGQEANEFVVKINAEVPLSEMFGYATDLRSQTQGRASYSMEPLKYAEAPTSVANAIIEARKAK.

A tr-type G domain is found at serine 8–threonine 290. Residues alanine 17 to threonine 24, aspartate 88 to histidine 92, and asparagine 142 to aspartate 145 each bind GTP.

Belongs to the TRAFAC class translation factor GTPase superfamily. Classic translation factor GTPase family. EF-G/EF-2 subfamily.

The protein resides in the cytoplasm. Functionally, catalyzes the GTP-dependent ribosomal translocation step during translation elongation. During this step, the ribosome changes from the pre-translocational (PRE) to the post-translocational (POST) state as the newly formed A-site-bound peptidyl-tRNA and P-site-bound deacylated tRNA move to the P and E sites, respectively. Catalyzes the coordinated movement of the two tRNA molecules, the mRNA and conformational changes in the ribosome. In Actinobacillus pleuropneumoniae serotype 5b (strain L20), this protein is Elongation factor G.